The following is a 265-amino-acid chain: Imidazole glycerol phosphate synthase subunit HisF (265 aa).

Residues aspartate 12 and aspartate 131 contribute to the active site.

It belongs to the HisA/HisF family. In terms of assembly, heterodimer of HisH and HisF.

The protein resides in the cytoplasm. It carries out the reaction 5-[(5-phospho-1-deoxy-D-ribulos-1-ylimino)methylamino]-1-(5-phospho-beta-D-ribosyl)imidazole-4-carboxamide + L-glutamine = D-erythro-1-(imidazol-4-yl)glycerol 3-phosphate + 5-amino-1-(5-phospho-beta-D-ribosyl)imidazole-4-carboxamide + L-glutamate + H(+). It functions in the pathway amino-acid biosynthesis; L-histidine biosynthesis; L-histidine from 5-phospho-alpha-D-ribose 1-diphosphate: step 5/9. Functionally, IGPS catalyzes the conversion of PRFAR and glutamine to IGP, AICAR and glutamate. The HisF subunit catalyzes the cyclization activity that produces IGP and AICAR from PRFAR using the ammonia provided by the HisH subunit. The polypeptide is Imidazole glycerol phosphate synthase subunit HisF (Alkalilimnicola ehrlichii (strain ATCC BAA-1101 / DSM 17681 / MLHE-1)).